Here is a 595-residue protein sequence, read N- to C-terminus: MIGRTHHCGQLSEEQVNERVQLKGWVQRRRDLGQVIFVDLRDRSGVVQLVFNSDISQEALETAEKVRNEYVLDVEGVVLKRDPSTVNDKIATGTIEVHVERLTILNKAKSLPFQIEANTDASEDIRLKYRYLDLRRPDMQETMKLRHQTTKLIRDFLDGQEFFEIETPMLTKSTPEGARDYLVPSRVHHGEFYALPQSPQIFKQLLMVSGFERYYQIVRCFRDEDLRADRQPEFTQIDIETSFMDKEDLLTMTENMMAKIMKEVKGLDVALPFPRMTYDDAMNRYGSDKPDTRFEMELIELSDIVKDSDFKVFSSAIKSGGIVKGLNLKGGAGSLSRKEIDGLAEFVKPYGAKGLAWLKVEEGELKGPIAKFFAGETGAELQQAMGAEDGDLLFFAADKKEVVFDSLGALRLKLGKDFNLIDESKFNFLWVVDFPLVEYDEEAKRFVALHHPFTSPKQEDLTKLETDPASVRADAYDLVLNGYELGGGSQRIYQRPVQEKMFAALGFTEEAAQKEFGFLLEAFEYGTPPHGGIALGLDRLVMLLAGRLNLRDTIAFPKTASASCLLTEAPGEVSLEQLLDLNLSIIGHKPDKVNV.

An L-aspartate-binding site is contributed by E176. An aspartate region spans residues 200 to 203 (QIFK). R222 contributes to the L-aspartate binding site. Residues 222–224 (RDE) and Q231 contribute to the ATP site. H450 is an L-aspartate binding site. An ATP-binding site is contributed by E484. R491 is a binding site for L-aspartate. 536–539 (GLDR) contributes to the ATP binding site.

Belongs to the class-II aminoacyl-tRNA synthetase family. Type 1 subfamily. In terms of assembly, homodimer.

The protein resides in the cytoplasm. The enzyme catalyses tRNA(Asp) + L-aspartate + ATP = L-aspartyl-tRNA(Asp) + AMP + diphosphate. Functionally, catalyzes the attachment of L-aspartate to tRNA(Asp) in a two-step reaction: L-aspartate is first activated by ATP to form Asp-AMP and then transferred to the acceptor end of tRNA(Asp). The polypeptide is Aspartate--tRNA ligase (Halalkalibacterium halodurans (strain ATCC BAA-125 / DSM 18197 / FERM 7344 / JCM 9153 / C-125) (Bacillus halodurans)).